A 122-amino-acid polypeptide reads, in one-letter code: Large ribosomal subunit protein uL14 (122 aa).

The protein belongs to the universal ribosomal protein uL14 family. As to quaternary structure, part of the 50S ribosomal subunit. Forms a cluster with proteins L3 and L19. In the 70S ribosome, L14 and L19 interact and together make contacts with the 16S rRNA in bridges B5 and B8.

In terms of biological role, binds to 23S rRNA. Forms part of two intersubunit bridges in the 70S ribosome. This is Large ribosomal subunit protein uL14 from Delftia acidovorans (strain DSM 14801 / SPH-1).